We begin with the raw amino-acid sequence, 1171 residues long: DNA-directed RNA polymerase subunit beta (1171 aa).

It belongs to the RNA polymerase beta chain family. In terms of assembly, the RNAP catalytic core consists of 2 alpha, 1 beta, 1 beta' and 1 omega subunit. When a sigma factor is associated with the core the holoenzyme is formed, which can initiate transcription.

It carries out the reaction RNA(n) + a ribonucleoside 5'-triphosphate = RNA(n+1) + diphosphate. In terms of biological role, DNA-dependent RNA polymerase catalyzes the transcription of DNA into RNA using the four ribonucleoside triphosphates as substrates. This Corynebacterium efficiens (strain DSM 44549 / YS-314 / AJ 12310 / JCM 11189 / NBRC 100395) protein is DNA-directed RNA polymerase subunit beta.